The chain runs to 93 residues: Small ribosomal subunit protein bS20 (93 aa).

Belongs to the bacterial ribosomal protein bS20 family.

Its function is as follows. Binds directly to 16S ribosomal RNA. This is Small ribosomal subunit protein bS20 from Hydrogenobaculum sp. (strain Y04AAS1).